A 208-amino-acid polypeptide reads, in one-letter code: Small ribosomal subunit protein uS4 (208 aa).

One can recognise an S4 RNA-binding domain in the interval 98 to 158; sequence RRLDNIVYRL…EKSRKVASIN (61 aa).

The protein belongs to the universal ribosomal protein uS4 family. Part of the 30S ribosomal subunit. Contacts protein S5. The interaction surface between S4 and S5 is involved in control of translational fidelity.

Its function is as follows. One of the primary rRNA binding proteins, it binds directly to 16S rRNA where it nucleates assembly of the body of the 30S subunit. With S5 and S12 plays an important role in translational accuracy. In Geotalea daltonii (strain DSM 22248 / JCM 15807 / FRC-32) (Geobacter daltonii), this protein is Small ribosomal subunit protein uS4.